The following is a 188-amino-acid chain: Glandular kallikrein-3, submandibular (188 aa).

In terms of domain architecture, Peptidase S1 spans 1–185 (NYHVLLGQNN…FTSWIKEVMK (185 aa)). N-linked (GlcNAc...) asparagine glycans are attached at residues asparagine 10 and asparagine 36. Aspartate 47 (charge relay system) is an active-site residue. Disulfide bonds link cysteine 79-cysteine 146, cysteine 111-cysteine 125, and cysteine 136-cysteine 161. Catalysis depends on serine 140, which acts as the Charge relay system.

It belongs to the peptidase S1 family. Kallikrein subfamily.

The catalysed reaction is Preferential cleavage of Arg-|-Xaa bonds in small molecule substrates. Highly selective action to release kallidin (lysyl-bradykinin) from kininogen involves hydrolysis of Met-|-Xaa or Leu-|-Xaa.. Its function is as follows. Glandular kallikreins cleave Met-Lys and Arg-Ser bonds in kininogen to release Lys-bradykinin. The polypeptide is Glandular kallikrein-3, submandibular (Klk3) (Rattus norvegicus (Rat)).